The following is a 1186-amino-acid chain: Myelin transcription factor 1-like protein (1186 aa).

Residues 1-21 (MEVDTEEKRHRTRSKGVRVPV) form a disordered region. A CCHHC-type 1 zinc finger spans residues 22 to 65 (EPAIQELFSCPTPGCDGSGHVSGKYARHRSVYGCPLAKKRKTQD). Zn(2+)-binding residues include Cys31, Cys36, His49, and Cys55. Disordered regions lie at residues 56 to 175 (PLAK…QMNC) and 220 to 247 (RTESEMNSNTSNSLEDDSDKNENLGRKS). Residues 86–169 (SVDECDDSDG…EEEEEEEENE (84 aa)) are compositionally biased toward acidic residues. Phosphoserine is present on Ser250. 2 disordered regions span residues 342–372 (SETNPQERNPQQNMNIRQHVRPEEDFPGRTP) and 449–513 (REKM…GCDG). Residues 343–357 (ETNPQERNPQQNMNI) show a composition bias toward polar residues. 3 stretches are compositionally biased toward basic and acidic residues: residues 361-372 (VRPEEDFPGRTP), 449-487 (REKMAMEAGRRDNMRSYEDQSPRQLPGEDRKPKSSDSHV), and 495-505 (DPSRTEKKESK). 2 CCHHC-type zinc fingers span residues 497 to 540 (SRTE…PPEI) and 541 to 584 (LAMH…KLAK). Cys506, Cys511, His524, Cys530, Cys550, Cys555, His568, and Cys574 together coordinate Zn(2+). Disordered regions lie at residues 659–709 (RAIA…GGGS) and 753–780 (KPQDLCATRNPDMEVDENGTLDLSMNKQ). Residues 666–683 (QTRDISPKGYDDAKRYCK) show a composition bias toward basic and acidic residues. A compositionally biased stretch (low complexity) spans 685-709 (PSPSSSSTSSYAPSSSSNLSCGGGS). 3 consecutive CCHHC-type zinc fingers follow at residues 896–939 (LATS…GIRI), 945–988 (DKED…QKDG), and 998–1041 (KSVK…MKKA). Zn(2+) contacts are provided by Cys905, Cys910, His923, Cys929, Cys954, Cys959, His972, Cys978, Cys1007, Cys1012, His1025, and Cys1031. Residues 1056-1130 (SNGIENDEEI…LANLSQSLIH (75 aa)) adopt a coiled-coil conformation.

This sequence belongs to the MYT1 family. Interacts with SIN3B.

Its subcellular location is the nucleus. The protein localises to the chromosome. Transcription factor that plays a key role in neuronal differentiation by specifically repressing expression of non-neuronal genes during neuron differentiation. In contrast to other transcription repressors that inhibit specific lineages, mediates repression of multiple differentiation programs. Also represses expression of negative regulators of neurogenesis, such as members of the Notch signaling pathway, including HES1. The combination of three transcription factors, ASCL1, POU3F2/BRN2 and MYT1L, is sufficient to reprogram fibroblasts and other somatic cells into induced neuronal (iN) cells in vitro. Directly binds the 5'-AAGTT-3' core motif present on the promoter of target genes and represses transcription by recruiting a multiprotein complex containing SIN3B. The 5'-AAGTT-3' core motif is absent from the promoter of neural genes. The sequence is that of Myelin transcription factor 1-like protein from Homo sapiens (Human).